The following is a 1079-amino-acid chain: Ubiquitin carboxyl-terminal hydrolase 26 (1079 aa).

Positions 1–12 are enriched in basic residues; that stretch reads MSRPNTRNKSKR. Residues 1-21 form a disordered region; sequence MSRPNTRNKSKRPRADDCESP. A USP domain is found at 106-446; it reads AGLTNLGATC…DAYMLMYKRI (341 aa). The active-site Nucleophile is Cys115. His359 (proton acceptor) is an active-site residue. The tract at residues 384–419 is disordered; the sequence is GLHPFGEKPGKSSDKTDQKPQGSSTADSVTNDDNNS. Over residues 388-401 the composition is skewed to basic and acidic residues; it reads FGEKPGKSSDKTDQ. Residues 402-417 are compositionally biased toward polar residues; sequence KPQGSSTADSVTNDDN. DUSP domains follow at residues 495–598, 613–715, and 738–862; these read AYIT…DDFC, DVYR…FPSD, and AVKL…AEIV. Residues 948–972 are disordered; sequence EASAAVPVPDRRTSKRSRRTTSGNS. Positions 961 to 1037 constitute a Ubiquitin-like domain; sequence SKRSRRTTSG…LWVKDSEIYE (77 aa).

The protein belongs to the peptidase C19 family.

It localises to the nucleus. It catalyses the reaction Thiol-dependent hydrolysis of ester, thioester, amide, peptide and isopeptide bonds formed by the C-terminal Gly of ubiquitin (a 76-residue protein attached to proteins as an intracellular targeting signal).. Functionally, recognizes and hydrolyzes the peptide bond at the C-terminal Gly of ubiquitin. Involved in the processing of poly-ubiquitin precursors as well as that of ubiquitinated proteins. Deubiquitinates H2BK143ub1 of histone H2B. This chain is Ubiquitin carboxyl-terminal hydrolase 26 (UBP26), found in Oryza sativa subsp. japonica (Rice).